The chain runs to 120 residues: NAD(P)H-quinone oxidoreductase subunit 3 (120 aa).

A run of 3 helical transmembrane segments spans residues 2 to 22 (FVLS…LVPI), 64 to 84 (MFAL…PWAV), and 89 to 109 (LGLL…IALV).

The protein belongs to the complex I subunit 3 family. As to quaternary structure, NDH-1 can be composed of about 15 different subunits; different subcomplexes with different compositions have been identified which probably have different functions.

The protein resides in the cellular thylakoid membrane. The enzyme catalyses a plastoquinone + NADH + (n+1) H(+)(in) = a plastoquinol + NAD(+) + n H(+)(out). It carries out the reaction a plastoquinone + NADPH + (n+1) H(+)(in) = a plastoquinol + NADP(+) + n H(+)(out). In terms of biological role, NDH-1 shuttles electrons from an unknown electron donor, via FMN and iron-sulfur (Fe-S) centers, to quinones in the respiratory and/or the photosynthetic chain. The immediate electron acceptor for the enzyme in this species is believed to be plastoquinone. Couples the redox reaction to proton translocation, and thus conserves the redox energy in a proton gradient. Cyanobacterial NDH-1 also plays a role in inorganic carbon-concentration. This Picosynechococcus sp. (strain ATCC 27264 / PCC 7002 / PR-6) (Agmenellum quadruplicatum) protein is NAD(P)H-quinone oxidoreductase subunit 3.